We begin with the raw amino-acid sequence, 94 residues long: MNKYELVYILKSNVEEEKRNQLLDKFRGIIEADGTIENVDEWGNRRLAYEINKINEGYYTLVNFSAAADVPKELDRNLKIADEVIRHMIIRLEK.

This sequence belongs to the bacterial ribosomal protein bS6 family.

Functionally, binds together with bS18 to 16S ribosomal RNA. The protein is Small ribosomal subunit protein bS6 of Alkaliphilus oremlandii (strain OhILAs) (Clostridium oremlandii (strain OhILAs)).